The chain runs to 395 residues: GA-binding protein subunit beta-1 (395 aa).

S2 carries the N-acetylserine modification. 2 ANK repeats span residues 5 to 34 (DLGK…PFTT) and 37 to 66 (LGTS…SRDA). K69 carries the N6-acetyllysine modification. ANK repeat units follow at residues 70 to 99 (VDRT…DVNA), 103 to 132 (LKMT…DVHT), and 136 to 166 (FCKT…QINT). The interval 258-327 (DGAIQQVVSS…ETVISEEPPA (70 aa)) is transcription activation and HCFC1 interaction. N6-acetyllysine occurs at positions 352 and 381.

As to quaternary structure, heterotetramer of two alpha and two beta subunits. Interacts with HCFC1, causing repression of transcriptional activity. Post-translationally, acetylated by EP300/p300. Deacetylated by SIRT7, promoting heterotetramerization and activity.

It localises to the nucleus. Functionally, transcription factor capable of interacting with purine rich repeats (GA repeats). Acts as a master regulator of nuclear-encoded mitochondrial genes. In terms of biological role, (Microbial infection) Necessary for the expression of the Adenovirus E4 gene. The sequence is that of GA-binding protein subunit beta-1 (GABPB1) from Homo sapiens (Human).